A 355-amino-acid chain; its full sequence is Agamous-like MADS-box protein AGL81 (355 aa).

Residues 1 to 22 are disordered; it reads MAIRSLPSSSRCSSSSSSSSYS. In terms of domain architecture, MADS-box spans 26 to 68; the sequence is TSLSNRLETIFKKASELCTLCDIEACVIYYGPDGELKTWPPER. A compositionally biased stretch (basic and acidic residues) spans 162-174; sequence VESQKHKETKPDH. The interval 162-186 is disordered; that stretch reads VESQKHKETKPDHQSLASSSLNHQT. Residues 176-186 are compositionally biased toward polar residues; that stretch reads SLASSSLNHQT.

In terms of assembly, interacts with MEE14/CBP1.

It localises to the nucleus. Its function is as follows. Probable transcription factor that may function in the maintenance of the proper function of the central cell in pollen tube attraction. This chain is Agamous-like MADS-box protein AGL81, found in Arabidopsis thaliana (Mouse-ear cress).